The following is a 265-amino-acid chain: Pro-opiomelanocortin (265 aa).

An N-terminal signal peptide occupies residues 1–26 (MPRLCSSRSGALLLALLLQASMEVRG). 2 disulfides stabilise this stretch: C28/C50 and C34/C46. T71 carries O-linked (GalNAc...) threonine glycosylation. F87 bears the Phenylalanine amide mark. Residues 89–138 (RRNGSSSSGVGGAAQKREEEVAVGEGPGPRGDDAETGPREDKRSYSMEHF) are disordered. N91 is a glycosylation site (N-linked (GlcNAc...) asparagine). Residues 106–129 (EEEVAVGEGPGPRGDDAETGPRED) constitute a propeptide that is removed on maturation. Basic and acidic residues predominate over residues 118 to 138 (RGDDAETGPREDKRSYSMEHF). S132 is subject to N-acetylserine; in Corticotropin. V144 carries the post-translational modification Valine amide. S162 is modified (phosphoserine). A Pyrrolidone carboxylic acid (Glu); partial modification is found at E173. Y200 is subject to Sulfotyrosine. Residues 209 to 240 (EAAEKKDSGPYKMEHFRWGSPPKDKRYGGFMT) form a disordered region. The span at 210-235 (AAEKKDSGPYKMEHFRWGSPPKDKRY) shows a compositional bias: basic and acidic residues.

This sequence belongs to the POMC family. Post-translationally, specific enzymatic cleavages at paired basic residues yield the different active peptides. In terms of tissue distribution, ACTH and MSH are produced by the pituitary gland.

It is found in the secreted. Stimulates the adrenal glands to release cortisol. In terms of biological role, anorexigenic peptide. Increases the pigmentation of skin by increasing melanin production in melanocytes. Its function is as follows. Endogenous orexigenic opiate. Functionally, endogenous opiate. This chain is Pro-opiomelanocortin (POMC), found in Bos taurus (Bovine).